A 627-amino-acid chain; its full sequence is Altered inheritance of mitochondria protein 9, mitochondrial (627 aa).

Residues 1 to 43 (MIRYTVAGHSRRCVVGASKRVGAIKCITVAATKRFISNKPNEV) constitute a mitochondrion transit peptide.

Belongs to the AIM9 family.

Its subcellular location is the mitochondrion. This Saccharomyces cerevisiae (strain RM11-1a) (Baker's yeast) protein is Altered inheritance of mitochondria protein 9, mitochondrial (AIM9).